The following is a 155-amino-acid chain: uncharacterized protein (155 aa).

This is an uncharacterized protein from Rickettsia prowazekii (strain Madrid E).